Reading from the N-terminus, the 66-residue chain is Small ribosomal subunit protein bS21A (66 aa).

A compositionally biased stretch (basic residues) spans 34 to 46 (KHYEKPSVKKKRK). Residues 34–66 (KHYEKPSVKKKRKQMEAERKRRKAQRFRKPDRD) form a disordered region.

It belongs to the bacterial ribosomal protein bS21 family.

The polypeptide is Small ribosomal subunit protein bS21A (Geobacter sulfurreducens (strain ATCC 51573 / DSM 12127 / PCA)).